Consider the following 249-residue polypeptide: Glutathione S-transferase S1 (249 aa).

Over residues 1–38 the composition is skewed to low complexity; it reads MADEAQAPPAEGAPPAEGEAPPPAEGAEGAVEGGEAAP. A disordered region spans residues 1–42; that stretch reads MADEAQAPPAEGAPPAEGEAPPPAEGAEGAVEGGEAAPPAEP. Residues 48 to 125 form the GST N-terminal domain; the sequence is HSYTLFYFNV…FLAKTVGLCG (78 aa). Glutathione-binding positions include Tyr54, Trp85, Lys89, 96–97, and 109–110; these read QM and QS. Residues 127 to 249 enclose the GST C-terminal domain; it reads TPWEDLQIDI…WIEKRPVTEV (123 aa).

It belongs to the GST superfamily. Sigma family. Homodimer.

The catalysed reaction is RX + glutathione = an S-substituted glutathione + a halide anion + H(+). Functionally, conjugation of reduced glutathione to a wide number of exogenous and endogenous hydrophobic electrophiles. May be involved in the detoxification of metabolites produced during cellular division and morphogenesis. The sequence is that of Glutathione S-transferase S1 from Drosophila melanogaster (Fruit fly).